The chain runs to 64 residues: Bacteriocin glycocin F (64 aa).

The first 21 residues, methionine 1–glycine 21, serve as a signal peptide directing secretion. 2 cysteine pairs are disulfide-bonded: cysteine 26/cysteine 49 and cysteine 33/cysteine 42. O-linked (GlcNAc) serine glycosylation occurs at serine 39. Residue cysteine 64 is glycosylated (S-linked (GlcNAc) cysteine).

Its subcellular location is the secreted. Its function is as follows. Has antibacterial activity against L.plantarum ATCC 8014. In purified form, the activity is bacteriostatic (IC(50)=2 nM) rather than bactericidal. The protein is Bacteriocin glycocin F of Lactiplantibacillus plantarum (Lactobacillus plantarum).